Consider the following 682-residue polypeptide: Acetyl-coenzyme A synthetase 2-like, mitochondrial (682 aa).

A mitochondrion-targeting transit peptide spans 1–38 (MAARSLGSGVGRLLRGLQGRSGQSGWSLSVSRSTATRL). CoA-binding positions include 217–220 (RGGR) and threonine 334. Lysine 389 carries the post-translational modification N6-acetyllysine. ATP-binding positions include 410–412 (GEP), 434–439 (DTWWQT), aspartate 526, and arginine 541. CoA is bound at residue serine 549. Arginine 552 contributes to the ATP binding site. Position 635 is an N6-acetyllysine (lysine 635).

It belongs to the ATP-dependent AMP-binding enzyme family. As to quaternary structure, interacts with SIRT3. Post-translationally, reversibly acetylated at Lys-635. The acetyl-CoA synthase activity is inhibited by acetylation and activated by deacetylation mediated by the deacetylase SIRT3. In terms of tissue distribution, highly expressed in heart, testis, kidney, skeletal muscle, lung and spleen. Detected at low levels in brain.

It localises to the mitochondrion matrix. It catalyses the reaction acetate + ATP + CoA = acetyl-CoA + AMP + diphosphate. It carries out the reaction propanoate + ATP + CoA = propanoyl-CoA + AMP + diphosphate. Inhibited by acetylation at Lys-635 and activated by deacetylation mediated by the deacetylase SIRT3. Functionally, catalyzes the synthesis of acetyl-CoA from short-chain fatty acids. Acetate is the preferred substrate. Can also utilize propionate with a much lower affinity. Provides acetyl-CoA that is utilized mainly for oxidation under ketogenic conditions. Involved in thermogenesis under ketogenic conditions, using acetate as a vital fuel when carbohydrate availability is insufficient. This chain is Acetyl-coenzyme A synthetase 2-like, mitochondrial (Acss1), found in Mus musculus (Mouse).